The chain runs to 313 residues: MSTAEAGGVFHRARGRTLDAFSSEKEREWKGPFYFIQGADPQFGLMKAWATGDCDNGGDEWEQEIRLAEQAVQAINKLNPKPKFFVLCGDLVHAMPGRPWRKEQTEDLQRVLRTVDSDIPLVLVSGNHDVGNVPTPETIAEFQRTWGDDYFSFWVGGVLFLVLNSQFLYDASRCPALKQEHDHWLDQQLRIAGQRACRHAVVFQHIPLFLQSIGEDDDYFNLTKSVRKEMADKFVEAGVKAVFSGHYHRNAGGTYRNLDMVVSSAIGCQLGTDTHGLRVVVVTAEKITHRYYSLDELSEKGIEDDLMDLLKEN.

Ser2 bears the Phosphoserine mark. A catalytic region spans residues 47–250 (KAWATGDCDN…AVFSGHYHRN (204 aa)). Residues Asp53, Asp90, Asn127, and His246 each contribute to the a divalent metal cation site. Ser293 carries the post-translational modification Phosphoserine.

The protein belongs to the metallophosphoesterase superfamily. CPPED1 family. A divalent metal cation is required as a cofactor.

It is found in the cytoplasm. It catalyses the reaction O-phospho-L-seryl-[protein] + H2O = L-seryl-[protein] + phosphate. The enzyme catalyses O-phospho-L-threonyl-[protein] + H2O = L-threonyl-[protein] + phosphate. Functionally, protein phosphatase that dephosphorylates AKT family kinase specifically at 'Ser-473', blocking cell cycle progression and promoting cell apoptosis. May play an inhibitory role in glucose uptake by adipocytes. In Bos taurus (Bovine), this protein is Serine/threonine-protein phosphatase CPPED1 (CPPED1).